The following is a 492-amino-acid chain: Putative protein disulfide-isomerase C1F5.02 (492 aa).

The N-terminal stretch at 1-22 (MKISNLLAAFLAFSGGFFCASA) is a signal peptide. The region spanning 23-128 (EVPKVNKEGL…LVKYMRKQLL (106 aa)) is the Thioredoxin 1 domain. Active-site nucleophile residues include cysteine 51 and cysteine 54. A disulfide bridge connects residues cysteine 51 and cysteine 54. 2 N-linked (GlcNAc...) asparagine glycosylation sites follow: asparagine 161 and asparagine 257. Positions 323 to 462 (ELTAKAMTKF…LSAFIDKHAS (140 aa)) constitute a Thioredoxin 2 domain. Active-site nucleophile residues include cysteine 385 and cysteine 388. Residues cysteine 385 and cysteine 388 are joined by a disulfide bond. The interval 468–492 (KEKESVPAPDLEDQVAVEDEMADEL) is disordered. Acidic residues predominate over residues 477 to 492 (DLEDQVAVEDEMADEL). The Prevents secretion from ER motif lies at 489 to 492 (ADEL).

This sequence belongs to the protein disulfide isomerase family.

Its subcellular location is the endoplasmic reticulum lumen. It carries out the reaction Catalyzes the rearrangement of -S-S- bonds in proteins.. Its function is as follows. Participates in the folding of proteins containing disulfide bonds, may be involved in glycosylation, prolyl hydroxylation and triglyceride transfer. The polypeptide is Putative protein disulfide-isomerase C1F5.02 (Schizosaccharomyces pombe (strain 972 / ATCC 24843) (Fission yeast)).